The chain runs to 249 residues: Zinc import ATP-binding protein ZnuC (249 aa).

The ABC transporter domain occupies 1-219 (MRLVSLRNAT…PEYQALFGSG (219 aa)). 36–43 (GPNGSGKS) lines the ATP pocket.

The protein belongs to the ABC transporter superfamily. Zinc importer (TC 3.A.1.15.5) family. In terms of assembly, the complex is composed of two ATP-binding proteins (ZnuC), two transmembrane proteins (ZnuB) and a solute-binding protein (ZnuA).

It localises to the cell inner membrane. It catalyses the reaction Zn(2+)(out) + ATP(in) + H2O(in) = Zn(2+)(in) + ADP(in) + phosphate(in) + H(+)(in). Its function is as follows. Part of the ABC transporter complex ZnuABC involved in zinc import. Responsible for energy coupling to the transport system. This is Zinc import ATP-binding protein ZnuC from Ruegeria sp. (strain TM1040) (Silicibacter sp.).